Reading from the N-terminus, the 813-residue chain is MSAFLNLYRNTLSWPLSFLVKDNPIPNNPVEELTLNIEQPIVYVLPYTSQTDLVVLRKNCLSLGLPDPFLDNRIEGKVLPRYVFLDEGHQFFKSKGAKKETEKVFKNYLELHRTSADLDVQVVPVSVLWGRSPGREDKGLPKLRLLNGLQKTIAAIWFGRDTFVRFSQAMSMRYMVNEYGEDEKLAQKLPRIAKMHFAKQRISATGPRLPNRQAMFNKLLQHPAVLQAIEDEARGKNMTKEKARKEAEKILNEIAADTNYSSLRVADRLLGWLWNKLYQGIEVEHADRVRRLALEGHEIVYVPCHRSHIDYLLLSYVLYHQGLVPPHIAAGINLNFWPVGRIFRSWGAFFIRRTFKGNRLYSTLFREYLGELFHRGYSVEYFIEGGRSRTGRLLTPKTGMMSMTLQALQQGQTRPISIVPVYVGYEHVLEVDTYAKELRGAAKEKENAGLVLRVIKKLRNLGRGFVNFGEPITLSTYLNRHFPEWKNEGRDERPLWFNKAVDAVSRQVMVNINKAAAVNAMNLTGTALLSSRQRALSREQLLEQLESYQQYLLNVSYSDDIIIPSAPPKELLDHVLGLDRVGILIEKDNFGELVRLERNHAVLMTYYRNNIQHLLVLPSLVASIVLHHEAIQKDLVLTSVEKLYPFLKAELFMHLPPEALREKVERIIAELHRQQLIKLNENILSINRPRVRTLQLWSAGMREILQRYLITVAILLQDPAISRGKLEKESQSIAQRLSVLHGINSPEFFDKAVFSTFIASLKDNGYFDTSGNADVTKLQGMADILEHVISTEINLTIKSAVETAVDLDEIESE.

The HXXXXD motif motif lies at 304-309 (CHRSHI).

The protein belongs to the GPAT/DAPAT family.

It is found in the cell inner membrane. It catalyses the reaction sn-glycerol 3-phosphate + an acyl-CoA = a 1-acyl-sn-glycero-3-phosphate + CoA. The protein operates within phospholipid metabolism; CDP-diacylglycerol biosynthesis; CDP-diacylglycerol from sn-glycerol 3-phosphate: step 1/3. The chain is Glycerol-3-phosphate acyltransferase from Actinobacillus succinogenes (strain ATCC 55618 / DSM 22257 / CCUG 43843 / 130Z).